The sequence spans 401 residues: Argininosuccinate synthase (401 aa).

ATP is bound by residues 10 to 18 (AYSGGVDTS) and alanine 38. Position 89 (tyrosine 89) interacts with L-citrulline. Residue glycine 119 participates in ATP binding. Threonine 121, asparagine 125, and aspartate 126 together coordinate L-aspartate. Asparagine 125 serves as a coordination point for L-citrulline. Residues arginine 129, serine 177, serine 186, glutamate 262, and tyrosine 274 each coordinate L-citrulline.

The protein belongs to the argininosuccinate synthase family. Type 1 subfamily. As to quaternary structure, homotetramer.

The protein resides in the cytoplasm. It carries out the reaction L-citrulline + L-aspartate + ATP = 2-(N(omega)-L-arginino)succinate + AMP + diphosphate + H(+). The protein operates within amino-acid biosynthesis; L-arginine biosynthesis; L-arginine from L-ornithine and carbamoyl phosphate: step 2/3. The sequence is that of Argininosuccinate synthase from Synechococcus sp. (strain CC9311).